Here is a 406-residue protein sequence, read N- to C-terminus: Bifunctional enzyme IspD/IspF (406 aa).

Residues 1-247 (MSLIRVNGEA…ALFFNPAKDT (247 aa)) form a 2-C-methyl-D-erythritol 4-phosphate cytidylyltransferase region. A 2-C-methyl-D-erythritol 2,4-cyclodiphosphate synthase region spans residues 248-406 (FIGMGFDTHA…HVSMRYKQKL (159 aa)). Residues Asp-254 and His-256 each coordinate a divalent metal cation. Residues 254–256 (DTH) and 280–281 (HS) contribute to the 4-CDP-2-C-methyl-D-erythritol 2-phosphate site. His-288 is an a divalent metal cation binding site. 4-CDP-2-C-methyl-D-erythritol 2-phosphate is bound by residues 302–304 (DIG), 307–311 (FPDND), 378–381 (TTME), Phe-385, and Lys-388.

This sequence in the N-terminal section; belongs to the IspD/TarI cytidylyltransferase family. IspD subfamily. It in the C-terminal section; belongs to the IspF family. A divalent metal cation is required as a cofactor.

It carries out the reaction 2-C-methyl-D-erythritol 4-phosphate + CTP + H(+) = 4-CDP-2-C-methyl-D-erythritol + diphosphate. It catalyses the reaction 4-CDP-2-C-methyl-D-erythritol 2-phosphate = 2-C-methyl-D-erythritol 2,4-cyclic diphosphate + CMP. The protein operates within isoprenoid biosynthesis; isopentenyl diphosphate biosynthesis via DXP pathway; isopentenyl diphosphate from 1-deoxy-D-xylulose 5-phosphate: step 2/6. It participates in isoprenoid biosynthesis; isopentenyl diphosphate biosynthesis via DXP pathway; isopentenyl diphosphate from 1-deoxy-D-xylulose 5-phosphate: step 4/6. Bifunctional enzyme that catalyzes the formation of 4-diphosphocytidyl-2-C-methyl-D-erythritol from CTP and 2-C-methyl-D-erythritol 4-phosphate (MEP) (IspD), and catalyzes the conversion of 4-diphosphocytidyl-2-C-methyl-D-erythritol 2-phosphate (CDP-ME2P) to 2-C-methyl-D-erythritol 2,4-cyclodiphosphate (ME-CPP) with a corresponding release of cytidine 5-monophosphate (CMP) (IspF). This is Bifunctional enzyme IspD/IspF from Helicobacter pylori (strain Shi470).